The following is a 120-amino-acid chain: Ig heavy chain V region 36-65 (120 aa).

One can recognise an Ig-like domain in the interval 1-111 (VQLQQSGAEL…GGSYYFDYWG (111 aa)).

The chain is Ig heavy chain V region 36-65 from Mus musculus (Mouse).